The sequence spans 234 residues: Hydrolase in agr operon (234 aa).

Residues 1–212 enclose the CN hydrolase domain; it reads ILYNKDTDVV…EKELTVTIDI (212 aa). Glu14 acts as the Proton acceptor in catalysis. The active-site Proton donor is the Lys83. The active-site Nucleophile is the Cys119.

The protein belongs to the carbon-nitrogen hydrolase superfamily. NIT1/NIT2 family.

In Staphylococcus lugdunensis, this protein is Hydrolase in agr operon.